We begin with the raw amino-acid sequence, 149 residues long: Lipoprotein MlpF (149 aa).

An N-terminal signal peptide occupies residues 1–17 (MKIINILFCLFLLLLNS). Cys-18 carries the N-palmitoyl cysteine lipid modification. The S-diacylglycerol cysteine moiety is linked to residue Cys-18. Residues 26-58 (LKNNAQQTKSRGKRDLTQKEATPEKPKSKEELL) are disordered. Basic and acidic residues predominate over residues 38 to 58 (KRDLTQKEATPEKPKSKEELL).

The protein belongs to the Multicopy lipoprotein (Mlp) family.

Its subcellular location is the cell outer membrane. An outer membrane protein that may participate in pathogenesis. Some human Lyme disease patients have antibodies against this protein. The Mlp proteins probably undergo intragenic recombination, generating new alleles. This Borreliella burgdorferi (strain ATCC 35210 / DSM 4680 / CIP 102532 / B31) (Borrelia burgdorferi) protein is Lipoprotein MlpF.